The primary structure comprises 231 residues: Ureidoacrylate amidohydrolase RutB (231 aa).

D25 (proton acceptor) is an active-site residue. The active site involves K134. Residue C167 is the Nucleophile of the active site.

Belongs to the isochorismatase family. RutB subfamily.

It catalyses the reaction (Z)-3-ureidoacrylate + H2O + H(+) = (Z)-3-aminoacrylate + NH4(+) + CO2. It carries out the reaction (Z)-3-ureidoacrylate + H2O = (Z)-3-aminoacrylate + carbamate + H(+). The enzyme catalyses (Z)-2-methylureidoacrylate + H2O + H(+) = (Z)-2-methylaminoacrylate + NH4(+) + CO2. Its function is as follows. Hydrolyzes ureidoacrylate to form aminoacrylate and carbamate. The carbamate hydrolyzes spontaneously, thereby releasing one of the nitrogen atoms of the pyrimidine ring as ammonia and one of its carbon atoms as CO2. The polypeptide is Ureidoacrylate amidohydrolase RutB (Escherichia coli O139:H28 (strain E24377A / ETEC)).